Consider the following 339-residue polypeptide: DNA-directed RNA polymerase subunit alpha (339 aa).

An alpha N-terminal domain (alpha-NTD) region spans residues 1–233 (MVREEVAGST…DLFLPFLHAE (233 aa)). Positions 264–339 (KKGIPLNCIF…IDLLKNKLSF (76 aa)) are alpha C-terminal domain (alpha-CTD).

It belongs to the RNA polymerase alpha chain family. As to quaternary structure, in plastids the minimal PEP RNA polymerase catalytic core is composed of four subunits: alpha, beta, beta', and beta''. When a (nuclear-encoded) sigma factor is associated with the core the holoenzyme is formed, which can initiate transcription.

The protein localises to the plastid. Its subcellular location is the chloroplast. The catalysed reaction is RNA(n) + a ribonucleoside 5'-triphosphate = RNA(n+1) + diphosphate. Functionally, DNA-dependent RNA polymerase catalyzes the transcription of DNA into RNA using the four ribonucleoside triphosphates as substrates. The sequence is that of DNA-directed RNA polymerase subunit alpha from Elymus californicus (California bottlebrush grass).